Reading from the N-terminus, the 73-residue chain is Translation initiation factor IF-1 1 (73 aa).

Residues 1–72 (MAKEELIEFG…TKGRINFRHK (72 aa)) form the S1-like domain.

The protein belongs to the IF-1 family. As to quaternary structure, component of the 30S ribosomal translation pre-initiation complex which assembles on the 30S ribosome in the order IF-2 and IF-3, IF-1 and N-formylmethionyl-tRNA(fMet); mRNA recruitment can occur at any time during PIC assembly.

The protein resides in the cytoplasm. In terms of biological role, one of the essential components for the initiation of protein synthesis. Stabilizes the binding of IF-2 and IF-3 on the 30S subunit to which N-formylmethionyl-tRNA(fMet) subsequently binds. Helps modulate mRNA selection, yielding the 30S pre-initiation complex (PIC). Upon addition of the 50S ribosomal subunit IF-1, IF-2 and IF-3 are released leaving the mature 70S translation initiation complex. The sequence is that of Translation initiation factor IF-1 1 from Cupriavidus pinatubonensis (strain JMP 134 / LMG 1197) (Cupriavidus necator (strain JMP 134)).